Consider the following 269-residue polypeptide: Ice-binding protein (269 aa).

An N-terminal signal peptide occupies residues 1–24 (MLKINRKYAIILAIVAFSSFQTEA). Short sequence motifs (probable ice-binding motif (T/S-X-T)) lie at residues 45–47 (TVT), 65–67 (SAT), 128–130 (SAQ), 154–156 (TLT), 180–182 (SAT), 198–200 (SIT), and 218–220 (AVT). The tract at residues 240–263 (VPEPDSSLAVLGSGLVSLLFAFRK) is PEP C-terminal anchor. A helical membrane pass occupies residues 245–261 (SSLAVLGSGLVSLLFAF).

This sequence belongs to the ice-binding protein family.

The protein localises to the cell outer membrane. Its function is as follows. A probable ice-binding protein that has ice-structuring activities in vitro. Thought not to anchor the cyanobacterium to ice surfaces, as its habitat is shallow puddles fed by glacier meltwater. This chain is Ice-binding protein, found in Nostoc sp. (strain HG1).